The following is a 193-amino-acid chain: Cysteine and glycine-rich protein 2 (193 aa).

The region spanning 10–61 (CGACGRTVYHAEEVQCDGRSFHRCCFLCMVCRKNLDSTTVAIHDEEIYCKSC) is the LIM zinc-binding 1 domain. Positions 64-69 (KKYGPK) match the Nuclear localization signal motif. A Glycyl lysine isopeptide (Lys-Gly) (interchain with G-Cter in SUMO2) cross-link involves residue Lys-91. N6-acetyllysine occurs at positions 112 and 131. The LIM zinc-binding 2 domain maps to 119–170 (CSRCGDSVYAAEKIIGAGKPWHKNCFRCAKCGKSLESTTLTEKEGEIYCKGC). At Lys-137 the chain carries N6-acetyllysine; alternate. Lys-137 is modified (N6-succinyllysine; alternate). Lys-161 bears the N6-acetyllysine mark.

As to quaternary structure, interacts with KAT14. The LIM domain 1 is necessary and sufficient for this interaction. Interacts with GLRX3.

Its subcellular location is the nucleus. Its function is as follows. Drastically down-regulated in response to PDGF-BB or cell injury, that promote smooth muscle cell proliferation and dedifferentiation. Seems to play a role in the development of the embryonic vascular system. The chain is Cysteine and glycine-rich protein 2 (CSRP2) from Bos taurus (Bovine).